A 451-amino-acid polypeptide reads, in one-letter code: Tubulin alpha chain (451 aa).

Position 11 (Q11) interacts with GTP. An N6-acetyllysine modification is found at K40. GTP-binding residues include E71, S140, G144, T145, T179, N206, and N228. Position 71 (E71) interacts with Mg(2+). E254 is a catalytic residue.

The protein belongs to the tubulin family. Dimer of alpha and beta chains. A typical microtubule is a hollow water-filled tube with an outer diameter of 25 nm and an inner diameter of 15 nM. Alpha-beta heterodimers associate head-to-tail to form protofilaments running lengthwise along the microtubule wall with the beta-tubulin subunit facing the microtubule plus end conferring a structural polarity. Microtubules usually have 13 protofilaments but different protofilament numbers can be found in some organisms and specialized cells. It depends on Mg(2+) as a cofactor. Post-translationally, undergoes a tyrosination/detyrosination cycle, the cyclic removal and re-addition of a C-terminal tyrosine residue by the enzymes tubulin tyrosine carboxypeptidase (TTCP) and tubulin tyrosine ligase (TTL), respectively. In terms of processing, acetylation of alpha chains at Lys-40 stabilizes microtubules and affects affinity and processivity of microtubule motors. This modification has a role in multiple cellular functions, ranging from cell motility, cell cycle progression or cell differentiation to intracellular trafficking and signaling. Actively expressed in the lens but does not seem to be lens-specific.

It is found in the cytoplasm. The protein localises to the cytoskeleton. The enzyme catalyses GTP + H2O = GDP + phosphate + H(+). Tubulin is the major constituent of microtubules, a cylinder consisting of laterally associated linear protofilaments composed of alpha- and beta-tubulin heterodimers. Microtubules grow by the addition of GTP-tubulin dimers to the microtubule end, where a stabilizing cap forms. Below the cap, tubulin dimers are in GDP-bound state, owing to GTPase activity of alpha-tubulin. This Enteroctopus dofleini (North Pacific giant octopus) protein is Tubulin alpha chain.